We begin with the raw amino-acid sequence, 477 residues long: Stromelysin-3 (477 aa).

A signal peptide spans 1-17 (MHLLILLPALCVLGAHS). A propeptide spans 18–85 (APLSYTYLQH…SSSGRNRQKR (68 aa)) (activation peptide). The tract at residues 64 to 83 (RCGVPDIPAPPDSSSGRNRQ) is disordered. The Zn(2+) site is built by cysteine 65, histidine 152, and aspartate 154. Residues aspartate 159, glycine 160, glycine 162, and isoleucine 164 each coordinate Ca(2+). Histidine 167, histidine 180, and histidine 203 together coordinate Zn(2+). Glutamate 204 is an active-site residue. The Zn(2+) site is built by histidine 207 and histidine 213. Cysteine 279 and cysteine 466 are disulfide-bonded. 4 Hemopexin repeats span residues 280–324 (KTNF…WRGI), 325–369 (PDTV…GISV), 370–418 (TQIQ…WRGV), and 419–466 (PKGI…FFNC).

Belongs to the peptidase M10A family. Requires Ca(2+) as cofactor. Zn(2+) serves as cofactor. Expressed in fibroblast cells that are activated by thyroid hormone. High levels in resorbing tail.

Its subcellular location is the secreted. It is found in the extracellular space. It localises to the extracellular matrix. May be involved in the modification of the extracellular matrix during metamorphic apoptosis. The chain is Stromelysin-3 (mmp11) from Xenopus laevis (African clawed frog).